The primary structure comprises 88 residues: MEVTDVRIRKVLDGGKMKAIVSVTLDDAFVVHDIKIVEGQNGLFVAMPSRRTPNGEFRDIAHPINASARARIQNAVLEAYEHRDAAEF.

The protein belongs to the SpoVG family.

In terms of biological role, could be involved in septation. The protein is Putative septation protein SpoVG of Desulforudis audaxviator (strain MP104C).